The following is a 52-amino-acid chain: uncharacterized protein (52 aa).

This is an uncharacterized protein from Escherichia coli.